A 488-amino-acid chain; its full sequence is 3-octaprenyl-4-hydroxybenzoate carboxy-lyase (488 aa).

A Mn(2+)-binding site is contributed by asparagine 172. Prenylated FMN is bound by residues 175 to 177 (IYR), 189 to 191 (RWL), and 194 to 195 (RG). Residue glutamate 238 participates in Mn(2+) binding. The active-site Proton donor is the aspartate 287.

Belongs to the UbiD family. In terms of assembly, homohexamer. Requires prenylated FMN as cofactor. It depends on Mn(2+) as a cofactor.

Its subcellular location is the cell membrane. The catalysed reaction is a 4-hydroxy-3-(all-trans-polyprenyl)benzoate + H(+) = a 2-(all-trans-polyprenyl)phenol + CO2. It participates in cofactor biosynthesis; ubiquinone biosynthesis. Catalyzes the decarboxylation of 3-octaprenyl-4-hydroxy benzoate to 2-octaprenylphenol, an intermediate step in ubiquinone biosynthesis. This Legionella pneumophila (strain Paris) protein is 3-octaprenyl-4-hydroxybenzoate carboxy-lyase.